We begin with the raw amino-acid sequence, 161 residues long: uncharacterized protein (161 aa).

The protein to R.leguminosarum PsiB.

This is an uncharacterized protein from Sinorhizobium fredii (strain NBRC 101917 / NGR234).